A 499-amino-acid polypeptide reads, in one-letter code: GTPase Der (499 aa).

EngA-type G domains are found at residues 3–166 (PVVA…LETL) and 213–386 (IKFA…QSAT). GTP contacts are provided by residues 9–16 (GRPNVGKS), 56–60 (DTGGI), 118–121 (NKTD), 219–226 (GRPNVGKS), 266–270 (DTAGV), and 331–334 (NKWD). The region spanning 387 to 471 (RRTSTAMLTR…PIRVEFQESA (85 aa)) is the KH-like domain. Residues 476–499 (GRKNTMTLSQERQRKRLLKAKTKK) are disordered. Positions 488-499 (QRKRLLKAKTKK) are enriched in basic residues.

The protein belongs to the TRAFAC class TrmE-Era-EngA-EngB-Septin-like GTPase superfamily. EngA (Der) GTPase family. As to quaternary structure, associates with the 50S ribosomal subunit.

GTPase that plays an essential role in the late steps of ribosome biogenesis. In Aeromonas salmonicida (strain A449), this protein is GTPase Der.